Here is a 618-residue protein sequence, read N- to C-terminus: Probable Xaa-Pro aminopeptidase P (618 aa).

4 residues coordinate Mn(2+): D414, D425, E523, and E537.

Belongs to the peptidase M24B family. The cofactor is Mn(2+).

The catalysed reaction is Release of any N-terminal amino acid, including proline, that is linked to proline, even from a dipeptide or tripeptide.. Its function is as follows. Catalyzes the removal of a penultimate prolyl residue from the N-termini of peptides. The protein is Probable Xaa-Pro aminopeptidase P (AMPP) of Metarhizium robertsii (strain ARSEF 23 / ATCC MYA-3075) (Metarhizium anisopliae (strain ARSEF 23)).